We begin with the raw amino-acid sequence, 470 residues long: ATP synthase subunit beta (470 aa).

155-162 (GGAGVGKT) is a binding site for ATP.

This sequence belongs to the ATPase alpha/beta chains family. F-type ATPases have 2 components, CF(1) - the catalytic core - and CF(0) - the membrane proton channel. CF(1) has five subunits: alpha(3), beta(3), gamma(1), delta(1), epsilon(1). CF(0) has three main subunits: a(1), b(2) and c(9-12). The alpha and beta chains form an alternating ring which encloses part of the gamma chain. CF(1) is attached to CF(0) by a central stalk formed by the gamma and epsilon chains, while a peripheral stalk is formed by the delta and b chains.

It is found in the cell membrane. The enzyme catalyses ATP + H2O + 4 H(+)(in) = ADP + phosphate + 5 H(+)(out). Its function is as follows. Produces ATP from ADP in the presence of a proton gradient across the membrane. The catalytic sites are hosted primarily by the beta subunits. This is ATP synthase subunit beta from Staphylococcus epidermidis (strain ATCC 35984 / DSM 28319 / BCRC 17069 / CCUG 31568 / BM 3577 / RP62A).